The sequence spans 226 residues: MDSLSDIDGDFDGRNEGGSSSDYRLLGRQITVHQFMGGGKAADLLLWRRRHLSLGVIIISTVAWLIFEFSGLPFLSVSSDVLLIVIMISFVHARVSAFRNRQLHSLPELVLSEEMVNSAAASFRIKLNHLLVMAHDVTVGNDFRLFFKVVICLWLLSAIGSYISLCTLLYIGTILSVTIPALYSKYQSKVDKCCGTIHRRLSHHYKIVDENVISRLSWSLSKDKDS.

The Reticulon domain occupies 41 to 224 (AADLLLWRRR…RLSWSLSKDK (184 aa)). A run of 3 helical transmembrane segments spans residues 54–74 (LGVI…GLPF), 75–95 (LSVS…HARV), and 149–169 (VVIC…CTLL).

It localises to the endoplasmic reticulum membrane. In Arabidopsis thaliana (Mouse-ear cress), this protein is Reticulon-like protein B16 (RTNLB16).